A 338-amino-acid polypeptide reads, in one-letter code: Large ribosomal subunit protein uL10 (338 aa).

Positions Thr298–Gly338 are disordered. Basic and acidic residues predominate over residues Ala309 to Ser325.

It belongs to the universal ribosomal protein uL10 family. As to quaternary structure, part of the 50S ribosomal subunit. Forms part of the ribosomal stalk which helps the ribosome interact with GTP-bound translation factors. Forms a heptameric L10(L12)2(L12)2(L12)2 complex, where L10 forms an elongated spine to which the L12 dimers bind in a sequential fashion.

In terms of biological role, forms part of the ribosomal stalk, playing a central role in the interaction of the ribosome with GTP-bound translation factors. The protein is Large ribosomal subunit protein uL10 of Saccharolobus solfataricus (strain ATCC 35092 / DSM 1617 / JCM 11322 / P2) (Sulfolobus solfataricus).